The sequence spans 219 residues: 7-cyano-7-deazaguanine synthase (219 aa).

Residue 10–20 (FSGGQDSTTCL) participates in ATP binding. Residues Cys-186, Cys-195, Cys-198, and Cys-201 each coordinate Zn(2+).

Belongs to the QueC family. As to quaternary structure, homodimer. It depends on Zn(2+) as a cofactor.

It catalyses the reaction 7-carboxy-7-deazaguanine + NH4(+) + ATP = 7-cyano-7-deazaguanine + ADP + phosphate + H2O + H(+). Its pathway is purine metabolism; 7-cyano-7-deazaguanine biosynthesis. Functionally, catalyzes the ATP-dependent conversion of 7-carboxy-7-deazaguanine (CDG) to 7-cyano-7-deazaguanine (preQ(0)). The chain is 7-cyano-7-deazaguanine synthase from Bacillus velezensis (strain DSM 23117 / BGSC 10A6 / LMG 26770 / FZB42) (Bacillus amyloliquefaciens subsp. plantarum).